The chain runs to 748 residues: Phytochrome-like protein Cph1 (748 aa).

Residues 19–86 (AIHTAHLIQP…IQSRLTAGQI (68 aa)) form the PAS domain. Residues 87-510 (SSLNPSKLWA…KKAIVNLILR (424 aa)) are chromophore binding domain. The GAF domain occupies 152–320 (NLRDFYDVIV…VVFSNISAQE (169 aa)). A tetrapyrrole is bound at residue C259. One can recognise a Histidine kinase domain in the interval 535–748 (IASHDLQEPL…TFYFSIPIGN (214 aa)). H538 carries the post-translational modification Phosphohistidine; by autocatalysis.

This sequence in the N-terminal section; belongs to the phytochrome family. Homodimer. Post-translationally, contains one covalently linked tetrapyrrole chromophore.

It catalyses the reaction ATP + protein L-histidine = ADP + protein N-phospho-L-histidine.. Its function is as follows. Regulatory photoreceptor which exists in two forms that are reversibly interconvertible by light: the R form that absorbs maximally in the red region of the spectrum and the FR form that absorbs maximally in the far-red region. Also has a slight blue shift for the far-red maximum. Forms a two-component system with the Rrcp1 response regulator. This Synechocystis sp. (strain ATCC 27184 / PCC 6803 / Kazusa) protein is Phytochrome-like protein Cph1 (cph1).